A 245-amino-acid chain; its full sequence is 1-(5-phosphoribosyl)-5-[(5-phosphoribosylamino)methylideneamino] imidazole-4-carboxamide isomerase (245 aa).

The active-site Proton acceptor is the Asp8. The Proton donor role is filled by Asp131.

Belongs to the HisA/HisF family.

It is found in the cytoplasm. It catalyses the reaction 1-(5-phospho-beta-D-ribosyl)-5-[(5-phospho-beta-D-ribosylamino)methylideneamino]imidazole-4-carboxamide = 5-[(5-phospho-1-deoxy-D-ribulos-1-ylimino)methylamino]-1-(5-phospho-beta-D-ribosyl)imidazole-4-carboxamide. It participates in amino-acid biosynthesis; L-histidine biosynthesis; L-histidine from 5-phospho-alpha-D-ribose 1-diphosphate: step 4/9. This Verminephrobacter eiseniae (strain EF01-2) protein is 1-(5-phosphoribosyl)-5-[(5-phosphoribosylamino)methylideneamino] imidazole-4-carboxamide isomerase.